We begin with the raw amino-acid sequence, 160 residues long: Cytochrome b6-f complex subunit 4 (160 aa).

3 helical membrane-spanning segments follow: residues 36 to 56, 95 to 115, and 131 to 151; these read LLYLFPVCILGTFACCIGLAV, LLGVLAMAAVPAGLITVPFIE, and LVFITGFIFAVWFGIGACLPI.

Belongs to the cytochrome b family. PetD subfamily. The 4 large subunits of the cytochrome b6-f complex are cytochrome b6, subunit IV (17 kDa polypeptide, petD), cytochrome f and the Rieske protein, while the 4 small subunits are petG, petL, petM and petN. The complex functions as a dimer.

The protein localises to the plastid. It is found in the chloroplast thylakoid membrane. In terms of biological role, component of the cytochrome b6-f complex, which mediates electron transfer between photosystem II (PSII) and photosystem I (PSI), cyclic electron flow around PSI, and state transitions. This chain is Cytochrome b6-f complex subunit 4, found in Thalassiosira pseudonana (Marine diatom).